The sequence spans 107 residues: Early E3A 12.5 kDa protein (107 aa).

This sequence belongs to the adenoviridae E3A-2 family.

In terms of biological role, not yet known. The polypeptide is Early E3A 12.5 kDa protein (Human adenovirus C serotype 5 (HAdV-5)).